The sequence spans 167 residues: Large ribosomal subunit protein uL10 (167 aa).

This sequence belongs to the universal ribosomal protein uL10 family. Part of the ribosomal stalk of the 50S ribosomal subunit. The N-terminus interacts with L11 and the large rRNA to form the base of the stalk. The C-terminus forms an elongated spine to which L12 dimers bind in a sequential fashion forming a multimeric L10(L12)X complex.

Forms part of the ribosomal stalk, playing a central role in the interaction of the ribosome with GTP-bound translation factors. The sequence is that of Large ribosomal subunit protein uL10 from Lactiplantibacillus plantarum (strain ATCC BAA-793 / NCIMB 8826 / WCFS1) (Lactobacillus plantarum).